Here is a 428-residue protein sequence, read N- to C-terminus: Adenylosuccinate synthetase (428 aa).

GTP is bound by residues 11-17 and 39-41; these read GDEGKGK and GHT. Catalysis depends on aspartate 12, which acts as the Proton acceptor. The Mg(2+) site is built by aspartate 12 and glycine 39. Residues 12–15, 37–40, threonine 130, arginine 144, asparagine 226, threonine 241, and arginine 305 each bind IMP; these read DEGK and NAGH. The Proton donor role is filled by histidine 40. Substrate is bound at residue 301–307; it reads VTTGRKR. GTP-binding positions include arginine 307, 333 to 335, and 415 to 417; these read KLD and GTG.

Belongs to the adenylosuccinate synthetase family. In terms of assembly, homodimer. Mg(2+) is required as a cofactor.

The protein resides in the cytoplasm. It catalyses the reaction IMP + L-aspartate + GTP = N(6)-(1,2-dicarboxyethyl)-AMP + GDP + phosphate + 2 H(+). Its pathway is purine metabolism; AMP biosynthesis via de novo pathway; AMP from IMP: step 1/2. Plays an important role in the de novo pathway and in the salvage pathway of purine nucleotide biosynthesis. Catalyzes the first committed step in the biosynthesis of AMP from IMP. This Komagataella phaffii (strain GS115 / ATCC 20864) (Yeast) protein is Adenylosuccinate synthetase.